The following is a 239-amino-acid chain: 2-C-methyl-D-erythritol 4-phosphate cytidylyltransferase (239 aa).

Belongs to the IspD/TarI cytidylyltransferase family. IspD subfamily.

It carries out the reaction 2-C-methyl-D-erythritol 4-phosphate + CTP + H(+) = 4-CDP-2-C-methyl-D-erythritol + diphosphate. The protein operates within isoprenoid biosynthesis; isopentenyl diphosphate biosynthesis via DXP pathway; isopentenyl diphosphate from 1-deoxy-D-xylulose 5-phosphate: step 2/6. Its function is as follows. Catalyzes the formation of 4-diphosphocytidyl-2-C-methyl-D-erythritol from CTP and 2-C-methyl-D-erythritol 4-phosphate (MEP). This chain is 2-C-methyl-D-erythritol 4-phosphate cytidylyltransferase, found in Ruthia magnifica subsp. Calyptogena magnifica.